Here is a 288-residue protein sequence, read N- to C-terminus: MVNLPKFTMRDLVESGVHFGHKASRWNPKMAPYIYGVHNDIHIINLQNTVVLLKNALKALYDIVLKRGRVLFIGTKVQASAIIADEAVRCGQYYINNRWLGGMLTNWETISLSIKKLKEYEKLIENVDNQFTKKELLLFEKKRAKLDRSIGGICNMGGLPHALFVIDTNKEHIAIKEANKLNIPVIAVLDTNSDPAGIDYPIPGNDDAVRSIDFFCKIVSDTILEAIRSDLAKSGINVDGIKDFSVEKREDLLRANNRDHKNNKNNSTIDNAENLKEENLVGGSNNES.

The interval 255–288 (ANNRDHKNNKNNSTIDNAENLKEENLVGGSNNES) is disordered.

It belongs to the universal ribosomal protein uS2 family.

The chain is Small ribosomal subunit protein uS2 from Ehrlichia chaffeensis (strain ATCC CRL-10679 / Arkansas).